Reading from the N-terminus, the 78-residue chain is Delta-conotoxin TxVIA (78 aa).

A signal peptide spans 1–22 (MKLTCMMIVAVLFLTAWTFATA). The propeptide occupies 23 to 49 (DDSGNGLENLFSNAHHQMKNPEASKLN). Disulfide bonds link Cys-53–Cys-68, Cys-60–Cys-72, and Cys-67–Cys-77. Met-59 is modified (methionine sulfoxide; partial).

Belongs to the conotoxin O1 superfamily. As to expression, expressed by the venom duct. Is present in all duct parts with a highest content in part 4 (distal part near the pharynx).

The protein resides in the secreted. In terms of biological role, delta-conotoxins bind to site 6 of voltage-gated sodium channels (Nav) and inhibit the inactivation process. Binding of this toxin is strongly calcium-dependent but not voltage-dependent. The binding site is most likely on the extracellular side of the sodium channel. Binds receptor sites on both mollusk and rat central nervous system, but despite its high affinity binding to rat sodium channel, it has no functional effect in vivo and in vitro on it. Also has no effect on Gambusia fish. Is important in mollusk for the paralysis of the prey. Upon injection of the peptide, a subordinate lobster assumes an exaggerated dominant posture (of a 'King-Kong' lobster!). This Conus textile (Cloth-of-gold cone) protein is Delta-conotoxin TxVIA.